We begin with the raw amino-acid sequence, 484 residues long: MYKTVLKNSGRIQRNFIFRNVSSTLQRSLATSASTSSSTTTSNAETGELHVSTPLDSPSVHPPDGSSISLKSATRDASLFGTRPIYLDVQATTPVDPRVLDKMLEFYTGLYGNPHSSTHAYGWETDKEVEKARGYIADVINADPKEIIFTSGATETNNMAIKGVPRFYKKTKKHIITTQTEHKCVLDSARHMQDEGFDITYLPVNSEGLINLDDLKKAIRKDTVLVSVMAVNNEIGVIQPLKEIGQICRENKIFFHTDAAQAYGKIPIDVNEMNIDLLSISSHKIYGPKGIGACYVRRRPRVRLDPIITGGGQERGLRSGTLAPPLVAGFGEAARLMKQESAFDKKHIEKLSTKLKNGLLSIPSTQFNGCNNPTYQYPGCVNVSFAYIEGESLLMALKDIALSSGSACTSASLEPSYVLHALGADDALAHSSIRFGIGRFTTEAEVDYVIQAINERVDFLRKMSPLWEMVQGGIDLNSIEWSGH.

Positions 29–42 (LATSASTSSSTTTS) are enriched in low complexity. The interval 29-69 (LATSASTSSSTTTSNAETGELHVSTPLDSPSVHPPDGSSIS) is disordered. Pyridoxal 5'-phosphate is bound by residues 153–154 (AT), Asn233, Gln261, and 281–283 (SSH). Lys284 bears the N6-(pyridoxal phosphate)lysine mark. Position 321 (Thr321) interacts with pyridoxal 5'-phosphate. Cys408 acts as the Cysteine persulfide intermediate in catalysis. Cys408 lines the [2Fe-2S] cluster pocket.

Belongs to the class-V pyridoxal-phosphate-dependent aminotransferase family. NifS/IscS subfamily. Pyridoxal 5'-phosphate is required as a cofactor.

The protein localises to the mitochondrion. The enzyme catalyses (sulfur carrier)-H + L-cysteine = (sulfur carrier)-SH + L-alanine. Functionally, catalyzes the removal of elemental sulfur from cysteine to produce alanine. It supplies the inorganic sulfur for iron-sulfur (Fe-S) clusters. Plays a role in both tRNA-processing and mitochondrial metabolism. Involved in the 2-thio-modification of both 5-carboxymethylaminomethyl-2-thiouridine in mitochondrial tRNAs and 5-methoxycarbonylmethyl-2-thiouridine (mcm5s2U) in cytoplasmic tRNAs. The protein is Cysteine desulfurase, mitochondrial of Candida maltosa (Yeast).